A 695-amino-acid polypeptide reads, in one-letter code: MNNNKQPKQGNFVKNILMWVILAIVVVVGFNFFFSSNQSSVDKISYSQLMTKLDGNKIENVTMQPSDSLITVTGEYKEPVKVKGTNNFPLLGNSSSEVKNFQAYIIPTDSVVKDIQNAAKSNDVKLSVVQASSSGMWVQILSYIIPMLLFVGIFWLMMGGMGARGGGGGGNPMSFGKSRAKQQDGKTSKVRFADVAGSEEEKQELVEVVDFLKNPKKYHDLGARIPAGVLLEGPPGTGKTLLAKAVAGEAGVPFYSISGSDFVEMFVGVGASRVRDLFENAKKTAPSIIFIDEIDAVGRQRGAGLGGGNDEREQTLNQLLVEMDGFQDDGNSVIVIAATNRSDVLDPALLRPGRFDRKVLVGAPDVKGREAVLKVHAKNKPLASDVDLHNVATQTPGYVGADLENVLNEAALVAARQNKKEINAADIDEGMDRAMAGPAKKDRIQSMREREIVAYHEAGHAIVGLVLENGSTVRKVTVVPRGRIGGYMLALPDEEIMQPTNFHLQDQLASLMGGRLGEEIVFGVATPGASNDIEKATHIARSMVTEYGMSKKLGMVSYEGDHQVFIGRDYGQTKTYSEATAVMIDDEVRRILGEAYDRAKEAIETHREQHKAIAEALLKYETLDAKQIMSLFKTGKMPDEAAAAEVPEPKTFEESLKDANANVDDFSNINIYNGDEKTDSKPEENKEKSEDETAE.

Residues 1–15 (MNNNKQPKQGNFVKN) are Cytoplasmic-facing. The helical transmembrane segment at 16–36 (ILMWVILAIVVVVGFNFFFSS) threads the bilayer. The Extracellular portion of the chain corresponds to 37–139 (NQSSVDKISY…QASSSGMWVQ (103 aa)). Residues 140–160 (ILSYIIPMLLFVGIFWLMMGG) form a helical membrane-spanning segment. Residues 161–695 (MGARGGGGGG…KEKSEDETAE (535 aa)) lie on the Cytoplasmic side of the membrane. Position 233–240 (233–240 (GPPGTGKT)) interacts with ATP. A Zn(2+)-binding site is contributed by His-456. Residue Glu-457 is part of the active site. His-460 and Asp-532 together coordinate Zn(2+). Positions 657 to 695 (KDANANVDDFSNINIYNGDEKTDSKPEENKEKSEDETAE) are disordered. A compositionally biased stretch (basic and acidic residues) spans 674–695 (GDEKTDSKPEENKEKSEDETAE).

In the central section; belongs to the AAA ATPase family. It in the C-terminal section; belongs to the peptidase M41 family. Homohexamer. Zn(2+) is required as a cofactor.

It is found in the cell membrane. Its function is as follows. Acts as a processive, ATP-dependent zinc metallopeptidase for both cytoplasmic and membrane proteins. Plays a role in the quality control of integral membrane proteins. The protein is ATP-dependent zinc metalloprotease FtsH of Lactococcus lactis subsp. lactis (strain IL1403) (Streptococcus lactis).